Consider the following 447-residue polypeptide: Argininosuccinate lyase (447 aa).

This sequence belongs to the lyase 1 family. Argininosuccinate lyase subfamily.

It is found in the cytoplasm. It catalyses the reaction 2-(N(omega)-L-arginino)succinate = fumarate + L-arginine. It functions in the pathway amino-acid biosynthesis; L-arginine biosynthesis; L-arginine from L-ornithine and carbamoyl phosphate: step 3/3. This is Argininosuccinate lyase from Bacteroides fragilis (strain YCH46).